The sequence spans 203 residues: A-type ATP synthase subunit E (203 aa).

Belongs to the V-ATPase E subunit family. As to quaternary structure, has multiple subunits with at least A(3), B(3), C, D, E, F, H, I and proteolipid K(x).

It localises to the cell membrane. In terms of biological role, component of the A-type ATP synthase that produces ATP from ADP in the presence of a proton gradient across the membrane. This Methanococcus aeolicus (strain ATCC BAA-1280 / DSM 17508 / OCM 812 / Nankai-3) protein is A-type ATP synthase subunit E.